A 486-amino-acid chain; its full sequence is ATP synthase subunit beta (486 aa).

Position 167 to 174 (167 to 174 (GGAGVGKT)) interacts with ATP.

Belongs to the ATPase alpha/beta chains family. F-type ATPases have 2 components, CF(1) - the catalytic core - and CF(0) - the membrane proton channel. CF(1) has five subunits: alpha(3), beta(3), gamma(1), delta(1), epsilon(1). CF(0) has three main subunits: a(1), b(2) and c(9-12). The alpha and beta chains form an alternating ring which encloses part of the gamma chain. CF(1) is attached to CF(0) by a central stalk formed by the gamma and epsilon chains, while a peripheral stalk is formed by the delta and b chains.

The protein resides in the cell inner membrane. It catalyses the reaction ATP + H2O + 4 H(+)(in) = ADP + phosphate + 5 H(+)(out). Its function is as follows. Produces ATP from ADP in the presence of a proton gradient across the membrane. The catalytic sites are hosted primarily by the beta subunits. The polypeptide is ATP synthase subunit beta (Anaplasma marginale (strain St. Maries)).